The chain runs to 320 residues: PUP1 protein homolog (320 aa).

A run of 2 helical transmembrane segments spans residues 66–85 and 100–119; these read MWGG…AYRY and FVLG…RSMY. Positions 205–320 are disordered; it reads GGVFNGSPFM…QSGRYGGNRS (116 aa). Phosphoserine is present on S230. The span at 253–266 shows a compositional bias: polar residues; sequence GDNSSSSSWENIRN. Positions 267-284 are enriched in basic and acidic residues; the sequence is TSRDQSQESDASVDHESD.

This sequence belongs to the PUP1 family.

Its subcellular location is the mitochondrion membrane. This Saccharomyces cerevisiae (strain ATCC 204508 / S288c) (Baker's yeast) protein is PUP1 protein homolog.